Reading from the N-terminus, the 173-residue chain is Large ribosomal subunit protein uL10 (173 aa).

The protein belongs to the universal ribosomal protein uL10 family. In terms of assembly, part of the ribosomal stalk of the 50S ribosomal subunit. The N-terminus interacts with L11 and the large rRNA to form the base of the stalk. The C-terminus forms an elongated spine to which L12 dimers bind in a sequential fashion forming a multimeric L10(L12)X complex.

Forms part of the ribosomal stalk, playing a central role in the interaction of the ribosome with GTP-bound translation factors. The protein is Large ribosomal subunit protein uL10 of Cupriavidus necator (strain ATCC 17699 / DSM 428 / KCTC 22496 / NCIMB 10442 / H16 / Stanier 337) (Ralstonia eutropha).